We begin with the raw amino-acid sequence, 188 residues long: ATP-dependent protease subunit HslV (188 aa).

Residue Thr7 is part of the active site. Residues Gly162, Cys165, and Ser168 each coordinate Na(+).

This sequence belongs to the peptidase T1B family. HslV subfamily. A double ring-shaped homohexamer of HslV is capped on each side by a ring-shaped HslU homohexamer. The assembly of the HslU/HslV complex is dependent on binding of ATP.

The protein localises to the cytoplasm. The catalysed reaction is ATP-dependent cleavage of peptide bonds with broad specificity.. Its activity is regulated as follows. Allosterically activated by HslU binding. In terms of biological role, protease subunit of a proteasome-like degradation complex believed to be a general protein degrading machinery. The sequence is that of ATP-dependent protease subunit HslV from Thiobacillus denitrificans (strain ATCC 25259 / T1).